We begin with the raw amino-acid sequence, 342 residues long: MSNAVSSSVFGEKNNSVAYELPWVEKYRPIVLDDIVGNEETIDRLKVIAKEGNMPHLVISGMPGIGKTTSILCLAHALLGPAYKEGVLELNASDERGIDVVRNRIKAFAQKKVILPPGRHKIIILDEADSMTAGAQQALRRTMEIYSNTTRFALACNQSNKIIEPIQSRCAILRYSRLTDQQVLQRLLNICKAEKVNYTDDGLAALIMTAEGDMRQAVNNLQSTVAGFGLVNGENVFRVADQPSPVAIHAMLTACQSGNIDVALEKLQGIWDLGFSAVDIVTNMFRVVKTMDSIPEFSRLEMLKEIGQTHMIILEGVQTLLQLSGLVCRLAKSQMKPESFII.

Residues V24, V36, 61 to 68 (GMPGIGKT), N157, and R215 contribute to the ATP site.

This sequence belongs to the activator 1 small subunits family. In terms of assembly, heteropentamer of subunits rfc1, rfc2, rfc3, rfc4 and rfc5 that forms a complex (RFC) with PCNA in the presence of ATP. Two other complexes exist where rfc1 can be replaced by either ctf18 or elg1 to form the ctf18-RFC or the elg1-RFC complexes respectively.

It localises to the nucleus. The elongation of primed DNA templates by DNA polymerase delta and epsilon requires the action of the accessory proteins PCNA and activator 1. The chain is Replication factor C subunit 4 (rfc4) from Schizosaccharomyces pombe (strain 972 / ATCC 24843) (Fission yeast).